Consider the following 195-residue polypeptide: Probable GTP-binding protein EngB (195 aa).

In terms of domain architecture, EngB-type G spans Glu-24–Leu-195. GTP contacts are provided by residues Gly-32–Ser-39, Gly-59–Leu-63, Asp-77–Gly-80, Thr-144–Asp-147, and Phe-176–Ser-178. Mg(2+)-binding residues include Ser-39 and Thr-61.

This sequence belongs to the TRAFAC class TrmE-Era-EngA-EngB-Septin-like GTPase superfamily. EngB GTPase family. Mg(2+) is required as a cofactor.

Its function is as follows. Necessary for normal cell division and for the maintenance of normal septation. This is Probable GTP-binding protein EngB from Streptococcus pneumoniae (strain Hungary19A-6).